We begin with the raw amino-acid sequence, 900 residues long: Alanine--tRNA ligase (900 aa).

Zn(2+) is bound by residues histidine 604, histidine 608, cysteine 708, and histidine 712.

This sequence belongs to the class-II aminoacyl-tRNA synthetase family. The cofactor is Zn(2+).

It is found in the cytoplasm. It carries out the reaction tRNA(Ala) + L-alanine + ATP = L-alanyl-tRNA(Ala) + AMP + diphosphate. Catalyzes the attachment of alanine to tRNA(Ala) in a two-step reaction: alanine is first activated by ATP to form Ala-AMP and then transferred to the acceptor end of tRNA(Ala). Also edits incorrectly charged Ser-tRNA(Ala) and Gly-tRNA(Ala) via its editing domain. The sequence is that of Alanine--tRNA ligase from Saccharolobus islandicus (strain Y.G.57.14 / Yellowstone #1) (Sulfolobus islandicus).